We begin with the raw amino-acid sequence, 334 residues long: Tryptophan--tRNA ligase (334 aa).

ATP-binding positions include 11–13 (QPS) and 19–20 (GN). The short motif at 12-20 (PSGELTIGN) is the 'HIGH' region element. Residue Asp-135 coordinates L-tryptophan. ATP contacts are provided by residues 147–149 (GED), Val-186, and 195–199 (KMSKS). Residues 195 to 199 (KMSKS) carry the 'KMSKS' region motif.

Belongs to the class-I aminoacyl-tRNA synthetase family. As to quaternary structure, homodimer.

The protein localises to the cytoplasm. The enzyme catalyses tRNA(Trp) + L-tryptophan + ATP = L-tryptophyl-tRNA(Trp) + AMP + diphosphate + H(+). Its function is as follows. Catalyzes the attachment of tryptophan to tRNA(Trp). The sequence is that of Tryptophan--tRNA ligase from Klebsiella aerogenes (Enterobacter aerogenes).